Consider the following 858-residue polypeptide: MAQVLHVSAPFPGTPGPASPPAFPSKEPDVPYSVETPYGYRLDLDFLKYVDDIEKGHTLRRVAVQRRPRLGSLPRGPGSWWTSTESLCSNASGDSRHSAYSYCGRGFYPQYGALETRGGFNPRVERTLLDARRRLEDQAAAPAGLGSLTPSAAGSTSSLVGVGLPPPTPRGSGLSTPVPPSAGHLAHVREQMAGALRKLRQLEEQVKLIPVLQVKLSVLQEEKRQLTVQLKSQKFLGHPAGARGRGELCLDLPEAPEDPVTLETRSVGTWVRERDLGMPDGEAALAAKVAVLETQLKKALQELQAAQARQADLPPQAWPPPDSPVRVDTVRVVQGPREVEVAASTAAGAPAQRAQSLEPYGAGLRALATSNGAESPPVFRSHEVMETVFPAPTASTSNVHQVKKISITERSCDGAAGHPQAPAESSLSPPESEGATQAQPEKNTGQVPAHDDTTIKEPIRQAACHESEFEEAGGAGGAQAGLRSIMKQKEEPTDPEAHRRSLQFVGVNGSISPRYESSSEDSSTAENFSDNESTENEAPEPEERVPSVAEAPQLRPKETAKAKTSREESQLPQESLHTPTAEGASGSSAKDEIRMELSPDLISACLALEKYLENPKALTERELKVAYTTVLQEWLRLACRSDAHPELVRRHLVTFRAMSARLLDYVVNIADSNGNTALHYSVSHANFPVVQQLLDSGVCQVDKQNRAGYSPIMLTALATLKTQDDIQTILQLFRLGDVNAKASQAGQTALMLAVSHGRVDVVKALLACEADVNVQDDDGSTALMCACEHGHKEITALLLAVPSCDISITDRDGSTALMVALDAGHSEIASMLYSRMNIKCSFAPMSDDESPASSSAEE.

The segment at 1 to 29 (MAQVLHVSAPFPGTPGPASPPAFPSKEPD) is disordered. The interaction with AIFM1 stretch occupies residues 1–72 (MAQVLHVSAP…AVQRRPRLGS (72 aa)). Positions 12–23 (PGTPGPASPPAF) are enriched in pro residues. A phosphoserine mark is found at serine 19, serine 83, serine 86, serine 89, and serine 92. Arginine 105 is modified (omega-N-methylarginine). The disordered stretch occupies residues 140 to 182 (AAPAGLGSLTPSAAGSTSSLVGVGLPPPTPRGSGLSTPVPPSA). Residues 148–159 (LTPSAAGSTSSL) are compositionally biased toward polar residues. Threonine 168 carries the post-translational modification Phosphothreonine. 2 coiled-coil regions span residues 183 to 234 (GHLA…KSQK) and 282 to 313 (EAAL…QADL). Serine 323 is modified (phosphoserine). Threonine 329 carries the phosphothreonine modification. Phosphoserine occurs at positions 356 and 375. Disordered stretches follow at residues 412–451 (CDGA…PAHD) and 488–590 (QKEE…SSAK). A compositionally biased stretch (low complexity) spans 421–435 (APAESSLSPPESEGA). A compositionally biased stretch (polar residues) spans 436–446 (TQAQPEKNTGQ). Basic and acidic residues predominate over residues 488-499 (QKEEPTDPEAHR). A compositionally biased stretch (low complexity) spans 509–528 (GSISPRYESSSEDSSTAENF). Serine 547 carries the post-translational modification Phosphoserine. Over residues 555-569 (RPKETAKAKTSREES) the composition is skewed to basic and acidic residues. A Phosphothreonine modification is found at threonine 559. One copy of the ANK 0; degenerate repeat lies at 621-658 (RELKVAYTTVLQEWLRLACRSDAHPELVRRHLVTFRAM). ANK repeat units lie at residues 673 to 703 (NGNT…QVDK), 707 to 740 (AGYS…DVNA), 745 to 774 (AGQT…DVNV), 778 to 808 (DGST…DISI), and 812 to 842 (DGST…KCSF). Residues 676 to 842 (TALHYSVSHA…YSRMNIKCSF (167 aa)) form an interaction with NCOA1 region.

Interacts (non-phosphorylated form) with NCOA1; NCOA2 AND NCOA3. Interacts with AIFM1. Interacts with ARHGDIA; the interaction is direct and may regulate the interaction of ARHGDIA with RHOA, RAC1 and CDC42. Interacts (via ANK repeats 1-5) with KIF21A. Phosphorylated by casein kinase II upon estrogen stimulation. Phosphorylation induces the release by KANK2 of NCOA1 and its translocation to the nucleus where NCOA1 can activate gene transcription.

The protein localises to the cytoplasm. It is found in the mitochondrion. In terms of biological role, involved in transcription regulation by sequestering in the cytoplasm nuclear receptor coactivators such as NCOA1, NCOA2 and NCOA3. Involved in regulation of caspase-independent apoptosis by sequestering the proapoptotic factor AIFM1 in mitochondria. Pro-apoptotic stimuli can induce its proteasomal degradation allowing the translocation of AIFM1 to the nucleus to induce apoptosis. Involved in the negative control of vitamin D receptor signaling pathway. Involved in actin stress fibers formation through its interaction with ARHGDIA and the regulation of the Rho signaling pathway. May thereby play a role in cell adhesion and migration, regulating for instance podocytes migration during development of the kidney. Through the Rho signaling pathway may also regulate cell proliferation. The sequence is that of KN motif and ankyrin repeat domain-containing protein 2 (KANK2) from Bos taurus (Bovine).